The sequence spans 520 residues: MATTSTTGSTLLQPLSNAVQLPIDQVNFVVCQLFALLAAIWFRTYLHSSKTSSFIRHVVATLLGLYLALFCFGWYALHFLVQSGISYCIMIIIGVENMHNYCFVFALGYLTVCQVTRVYIFDYGQYSADFSGPMMIITQKITSLACEIHDGMFRKDEELTSSQRDLAVRRMPSLLEYLSYNCNFMGILAGPLCSYKDYITFIEGRSYHITQSGENGKEETQYERTEPSPNTAVVQKLLVCGLSLLFHLTICTTLPVEYNIDEHFQATASWPTKIIYLYISLLAARPKYYFAWTLADAINNAAGFGFRGYDENGAARWDLISNLRIQQIEMSTSFKMFLDNWNIQTALWLKRVCYERTSFSPTIQTFILSAIWHGVYPGYYLTFLTGVLMTLAARAMRNNFRHYFIEPSQLKLFYDVITWIVTQVAISYTVVPFVLLSIKPSLTFYSSWYYCLHILGILVLLLLPVKKTQRRKNTHENIQLSQSKKFDEGENSLGQNSFSTTNNVCNQNQEIASRHSSLKQ.

6 helical membrane passes run Pro-22–Phe-42, Thr-61–Val-81, Cys-88–Gly-108, Phe-184–Gly-204, Leu-237–Glu-257, and Phe-264–Ala-284. Active-site residues include Asn-342 and His-373. 3 consecutive transmembrane segments (helical) span residues Phe-366–Gly-386, Val-416–Leu-436, and Phe-444–Pro-464.

Belongs to the membrane-bound acyltransferase family. Expressed in neutrophils.

The protein resides in the endoplasmic reticulum membrane. The enzyme catalyses a 1-acyl-sn-glycero-3-phosphocholine + an acyl-CoA = a 1,2-diacyl-sn-glycero-3-phosphocholine + CoA. It catalyses the reaction a 1-acyl-sn-glycero-3-phosphoethanolamine + an acyl-CoA = a 1,2-diacyl-sn-glycero-3-phosphoethanolamine + CoA. It carries out the reaction a 1-acyl-sn-glycero-3-phosphate + an acyl-CoA = a 1,2-diacyl-sn-glycero-3-phosphate + CoA. The catalysed reaction is (9Z)-hexadecenoyl-CoA + 1-hexadecanoyl-sn-glycero-3-phosphocholine = 1-hexadecanoyl-2-(9Z-hexadecenoyl)-sn-glycero-3-phosphocholine + CoA. The enzyme catalyses 1-hexadecanoyl-sn-glycero-3-phosphoethanolamine + (9Z)-octadecenoyl-CoA = 1-hexadecanoyl-2-(9Z-octadecenoyl)-sn-glycero-3-phosphoethanolamine + CoA. It catalyses the reaction 1-hexadecanoyl-sn-glycero-3-phosphoethanolamine + (9Z)-hexadecenoyl-CoA = 1-hexadecanoyl-2-(9Z)-hexadecenoyl-sn-glycero-3-phosphoethanolamine + CoA. It carries out the reaction 1-(9Z-octadecenoyl)-sn-glycero-3-phospho-L-serine + hexadecanoyl-CoA = 1-(9Z)-octadecenoyl-2-hexadecanoyl-sn-glycero-3-phosphoserine + CoA. The catalysed reaction is (9Z,12Z)-octadecadienoyl-CoA + 1-hexadecanoyl-sn-glycero-3-phosphocholine = 1-hexadecanoyl-2-(9Z,12Z-octadecadienoyl)-sn-glycero-3-phosphocholine + CoA. The enzyme catalyses 1-hexadecanoyl-sn-glycero-3-phosphocholine + (9Z)-octadecenoyl-CoA = 1-hexadecanoyl-2-(9Z-octadecenoyl)-sn-glycero-3-phosphocholine + CoA. It catalyses the reaction 1-hexadecanoyl-sn-glycero-3-phosphate + (9Z)-hexadecenoyl-CoA = 1-hexadecanoyl-2-[(9Z)-hexadec-9-enoyl]-sn-glycero-3-phosphate + CoA. It carries out the reaction 1-hexadecanoyl-sn-glycero-3-phosphate + (9Z)-octadecenoyl-CoA = 1-hexadecanoyl-2-(9Z-octadecenoyl)-sn-glycero-3-phosphate + CoA. The catalysed reaction is a 1-O-(1Z-alkenyl)-sn-glycero-3-phosphocholine + (9Z)-octadecenoyl-CoA = 1-O-(1Z)-alkenyl-2-(9Z)-octadecenoyl-sn-glycero-3-phosphocholine + CoA. The enzyme catalyses a 1-O-(1Z-alkenyl)-sn-glycero-3-phosphoethanolamine + (9Z)-octadecenoyl-CoA = 1-O-(1Z)-alkenyl-2-(9Z)-octadecenoyl-sn-glycero-3-phosphoethanolamine + CoA. It catalyses the reaction 1-octadecanoyl-sn-glycero-3-phosphoethanolamine + (9Z)-octadecenoyl-CoA = 1-octadecanoyl-2-(9Z-octadecenoyl)-sn-glycero-3-phosphoethanolamine + CoA. It carries out the reaction 1-octadecanoyl-sn-glycero-3-phosphocholine + (9Z)-octadecenoyl-CoA = 1-octadecanoyl-2-(9Z-octadecenoyl)-sn-glycero-3-phosphocholine + CoA. The catalysed reaction is 1-(9Z-octadecenoyl)-sn-glycero-3-phosphoethanolamine + (9Z)-octadecenoyl-CoA = 1,2-di-(9Z-octadecenoyl)-sn-glycero-3-phosphoethanolamine + CoA. It participates in lipid metabolism; phospholipid metabolism. With respect to regulation, partially inhibited by thimerosal. Functionally, acyltransferase which catalyzes the transfer of an acyl group from an acyl-CoA to a lysophospholipid leading to the production of a phospholipid and participates in the reacylation step of the phospholipid remodeling pathway also known as the Lands cycle. Catalyzes preferentially the acylation of lysophosphatidylethanolamine (1-acyl-sn-glycero-3-phosphoethanolamine or LPE) and lysophosphatidic acid (LPA) and to a lesser extend lysophosphatidylcholine (LPC) and lysophosphatidylserine (LPS). Prefers oleoyl-CoA as the acyl donor. May be involved in chondrocyte differentiation. This chain is Membrane-bound glycerophospholipid O-acyltransferase 2, found in Homo sapiens (Human).